A 271-amino-acid chain; its full sequence is MRASSHLPQLHGRLDLTFERRRGTTRLVASEQTPPLNVSRVLRTEEVDLATVYLVETSGGVVSGDSQTIAIYVGEGARVELIPQSATKVYPSRKQGESSTQQVWLRVDEGAAAFWKPESIIPFRKASFLQSTRFHLHSSSTFFYGDMLTPGRVHHNERFQYEQVDSLVEIYLDETLVVHDRVHLQPKDQLQTIGRLDGYSYYGAVWMHAPILKGAHLEQWMENGGQNDRFAYTCVAEGLIHVRWLSESSWRLRAALNDLYTAFRTFALKGE.

This sequence belongs to the UreD family. UreD, UreF and UreG form a complex that acts as a GTP-hydrolysis-dependent molecular chaperone, activating the urease apoprotein by helping to assemble the nickel containing metallocenter of UreC. The UreE protein probably delivers the nickel.

It is found in the cytoplasm. Required for maturation of urease via the functional incorporation of the urease nickel metallocenter. The protein is Urease accessory protein UreD of Halalkalibacterium halodurans (strain ATCC BAA-125 / DSM 18197 / FERM 7344 / JCM 9153 / C-125) (Bacillus halodurans).